The sequence spans 73 residues: Large ribosomal subunit protein bL31 (73 aa).

It belongs to the bacterial ribosomal protein bL31 family. Type A subfamily. In terms of assembly, part of the 50S ribosomal subunit.

Binds the 23S rRNA. The protein is Large ribosomal subunit protein bL31 of Paracoccus denitrificans (strain Pd 1222).